A 127-amino-acid polypeptide reads, in one-letter code: Large ribosomal subunit protein uL22 (127 aa).

It belongs to the universal ribosomal protein uL22 family. Part of the 50S ribosomal subunit.

In terms of biological role, this protein binds specifically to 23S rRNA; its binding is stimulated by other ribosomal proteins, e.g. L4, L17, and L20. It is important during the early stages of 50S assembly. It makes multiple contacts with different domains of the 23S rRNA in the assembled 50S subunit and ribosome. The globular domain of the protein is located near the polypeptide exit tunnel on the outside of the subunit, while an extended beta-hairpin is found that lines the wall of the exit tunnel in the center of the 70S ribosome. The polypeptide is Large ribosomal subunit protein uL22 (Methylorubrum extorquens (strain CM4 / NCIMB 13688) (Methylobacterium extorquens)).